Here is a 196-residue protein sequence, read N- to C-terminus: Recombination protein RecR (196 aa).

Residues 57-72 (CERCHTFTQADICATC) form a C4-type zinc finger. Positions 80–175 (SKLCVVETPA…RLTRLARGVP (96 aa)) constitute a Toprim domain.

The protein belongs to the RecR family.

In terms of biological role, may play a role in DNA repair. It seems to be involved in an RecBC-independent recombinational process of DNA repair. It may act with RecF and RecO. This is Recombination protein RecR from Albidiferax ferrireducens (strain ATCC BAA-621 / DSM 15236 / T118) (Rhodoferax ferrireducens).